Reading from the N-terminus, the 164-residue chain is C-phycoerythrin class 1 subunit alpha (164 aa).

Cys82 and Cys139 together coordinate (2R,3E)-phycoerythrobilin.

It belongs to the phycobiliprotein family. In terms of assembly, heterodimer of an alpha and a beta chain. In terms of processing, contains one covalently linked bilin chromophore.

The protein localises to the cellular thylakoid membrane. Functionally, light-harvesting photosynthetic bile pigment-protein from the phycobiliprotein complex. The protein is C-phycoerythrin class 1 subunit alpha (cpeA) of Synechococcus sp. (strain WH7803).